Reading from the N-terminus, the 170-residue chain is Fluoride-specific ion channel FluC 2 (170 aa).

4 helical membrane-spanning segments follow: residues 8-28 (ALVFLGGALGAIIRWTLTVWI), 55-75 (IALLVVNVLGALLLGLLVGMI), 84-104 (TFWGTGVLGGFTSFSSLAAAV), and 114-134 (ILIGGTYGVFTLALGLIAAAM). Na(+)-binding residues include glycine 92 and threonine 95.

The protein belongs to the fluoride channel Fluc/FEX (TC 1.A.43) family.

It localises to the cell membrane. The catalysed reaction is fluoride(in) = fluoride(out). Its activity is regulated as follows. Na(+) is not transported, but it plays an essential structural role and its presence is essential for fluoride channel function. Functionally, fluoride-specific ion channel. Important for reducing fluoride concentration in the cell, thus reducing its toxicity. This chain is Fluoride-specific ion channel FluC 2, found in Corynebacterium jeikeium (strain K411).